Reading from the N-terminus, the 100-residue chain is C-X-C motif chemokine 3 (100 aa).

An N-terminal signal peptide occupies residues 1 to 31; that stretch reads MAPPTCRLLSAALVLLLLLATNHQATGAVVA. Disulfide bonds link Cys-36-Cys-62 and Cys-38-Cys-78.

This sequence belongs to the intercrine alpha (chemokine CxC) family.

It localises to the secreted. Functionally, ligand for CXCR2. Has chemotactic activity for neutrophils. May play a role in inflammation and exert its effects on endothelial cells in an autocrine fashion. This Mus musculus (Mouse) protein is C-X-C motif chemokine 3.